We begin with the raw amino-acid sequence, 449 residues long: N-succinylarginine dihydrolase (449 aa).

Substrate-binding positions include 19-28 (GGLSYGNVAS), asparagine 110, and 137-138 (HR). The segment at 23–43 (YGNVASQSNSQQASNPREAAR) is disordered. Residues 27–37 (ASQSNSQQASN) are compositionally biased toward low complexity. Residue glutamate 174 is part of the active site. Arginine 214 serves as a coordination point for substrate. Residue histidine 250 is part of the active site. Positions 252 and 365 each coordinate substrate. Cysteine 371 (nucleophile) is an active-site residue.

The protein belongs to the succinylarginine dihydrolase family. Homodimer.

It catalyses the reaction N(2)-succinyl-L-arginine + 2 H2O + 2 H(+) = N(2)-succinyl-L-ornithine + 2 NH4(+) + CO2. Its pathway is amino-acid degradation; L-arginine degradation via AST pathway; L-glutamate and succinate from L-arginine: step 2/5. Catalyzes the hydrolysis of N(2)-succinylarginine into N(2)-succinylornithine, ammonia and CO(2). The chain is N-succinylarginine dihydrolase from Pseudomonas putida (strain ATCC 47054 / DSM 6125 / CFBP 8728 / NCIMB 11950 / KT2440).